The primary structure comprises 325 residues: Tetraacyldisaccharide 4'-kinase (325 aa).

55 to 62 (TAGGNGKT) is a binding site for ATP.

Belongs to the LpxK family.

The enzyme catalyses a lipid A disaccharide + ATP = a lipid IVA + ADP + H(+). It participates in glycolipid biosynthesis; lipid IV(A) biosynthesis; lipid IV(A) from (3R)-3-hydroxytetradecanoyl-[acyl-carrier-protein] and UDP-N-acetyl-alpha-D-glucosamine: step 6/6. Transfers the gamma-phosphate of ATP to the 4'-position of a tetraacyldisaccharide 1-phosphate intermediate (termed DS-1-P) to form tetraacyldisaccharide 1,4'-bis-phosphate (lipid IVA). This is Tetraacyldisaccharide 4'-kinase from Salmonella enteritidis PT4 (strain P125109).